The chain runs to 146 residues: Large ribosomal subunit protein uL15 (146 aa).

Over residues 1–13 (MKLHELKPAEGSR) the composition is skewed to basic and acidic residues. Residues 1-56 (MKLHELKPAEGSRKVRNRVGRGAATGNGKTSGRGQKGQKARSGGSVRPGFEGGQLP) are disordered. The segment covering 23–35 (AATGNGKTSGRGQ) has biased composition (gly residues).

The protein belongs to the universal ribosomal protein uL15 family. As to quaternary structure, part of the 50S ribosomal subunit.

Functionally, binds to the 23S rRNA. This is Large ribosomal subunit protein uL15 from Staphylococcus saprophyticus subsp. saprophyticus (strain ATCC 15305 / DSM 20229 / NCIMB 8711 / NCTC 7292 / S-41).